We begin with the raw amino-acid sequence, 204 residues long: Ubiquitin-conjugating enzyme E2 S (204 aa).

Residues 14–160 (QIIKQVAREI…AKMFTEIHAK (147 aa)) enclose the UBC core domain. Cys98 acts as the Glycyl thioester intermediate in catalysis. Over residues 165 to 176 (SSNNISEGQQES) the composition is skewed to polar residues. The interval 165–204 (SSNNISEGQQESLPGKKRVAVNEKMCDKKKKDKKRALKRL) is disordered. The span at 191–204 (DKKKKDKKRALKRL) shows a compositional bias: basic residues.

The protein belongs to the ubiquitin-conjugating enzyme family.

It carries out the reaction S-ubiquitinyl-[E1 ubiquitin-activating enzyme]-L-cysteine + [E2 ubiquitin-conjugating enzyme]-L-cysteine = [E1 ubiquitin-activating enzyme]-L-cysteine + S-ubiquitinyl-[E2 ubiquitin-conjugating enzyme]-L-cysteine.. Its pathway is protein modification; protein ubiquitination. In terms of biological role, catalyzes the covalent attachment of ubiquitin to other proteins. Acts as an essential factor of the anaphase promoting complex/cyclosome (APC/C), a cell cycle-regulated ubiquitin ligase that controls progression through mitosis. Acts by specifically elongating polyubiquitin chains initiated by the E2 enzyme UBCH10 on APC/C substrates, enhancing the degradation of APC/C substrates by the proteasome and promoting mitotic exit. This Nematostella vectensis (Starlet sea anemone) protein is Ubiquitin-conjugating enzyme E2 S.